A 407-amino-acid chain; its full sequence is Phosphopentomutase (407 aa).

Mn(2+) is bound by residues aspartate 10, aspartate 306, histidine 311, aspartate 347, histidine 348, and histidine 359.

Belongs to the phosphopentomutase family. Requires Mn(2+) as cofactor.

The protein localises to the cytoplasm. It catalyses the reaction 2-deoxy-alpha-D-ribose 1-phosphate = 2-deoxy-D-ribose 5-phosphate. The catalysed reaction is alpha-D-ribose 1-phosphate = D-ribose 5-phosphate. Its pathway is carbohydrate degradation; 2-deoxy-D-ribose 1-phosphate degradation; D-glyceraldehyde 3-phosphate and acetaldehyde from 2-deoxy-alpha-D-ribose 1-phosphate: step 1/2. In terms of biological role, isomerase that catalyzes the conversion of deoxy-ribose 1-phosphate (dRib-1-P) and ribose 1-phosphate (Rib-1-P) to deoxy-ribose 5-phosphate (dRib-5-P) and ribose 5-phosphate (Rib-5-P), respectively. This chain is Phosphopentomutase, found in Pectobacterium carotovorum subsp. carotovorum (strain PC1).